The sequence spans 240 residues: Phosphatidylserine decarboxylase proenzyme (240 aa).

Serine 209 (schiff-base intermediate with substrate; via pyruvic acid) is an active-site residue. Pyruvic acid (Ser); by autocatalysis is present on serine 209.

The protein belongs to the phosphatidylserine decarboxylase family. PSD-A subfamily. Heterodimer of a large membrane-associated beta subunit and a small pyruvoyl-containing alpha subunit. Pyruvate is required as a cofactor. Is synthesized initially as an inactive proenzyme. Formation of the active enzyme involves a self-maturation process in which the active site pyruvoyl group is generated from an internal serine residue via an autocatalytic post-translational modification. Two non-identical subunits are generated from the proenzyme in this reaction, and the pyruvate is formed at the N-terminus of the alpha chain, which is derived from the carboxyl end of the proenzyme. The post-translation cleavage follows an unusual pathway, termed non-hydrolytic serinolysis, in which the side chain hydroxyl group of the serine supplies its oxygen atom to form the C-terminus of the beta chain, while the remainder of the serine residue undergoes an oxidative deamination to produce ammonia and the pyruvoyl prosthetic group on the alpha chain.

It is found in the cell membrane. The enzyme catalyses a 1,2-diacyl-sn-glycero-3-phospho-L-serine + H(+) = a 1,2-diacyl-sn-glycero-3-phosphoethanolamine + CO2. It participates in phospholipid metabolism; phosphatidylethanolamine biosynthesis; phosphatidylethanolamine from CDP-diacylglycerol: step 2/2. Functionally, catalyzes the formation of phosphatidylethanolamine (PtdEtn) from phosphatidylserine (PtdSer). The polypeptide is Phosphatidylserine decarboxylase proenzyme (Mycobacterium marinum (strain ATCC BAA-535 / M)).